A 741-amino-acid chain; its full sequence is Oosporein cluster regulator OpS3 (741 aa).

The interval 16-39 is disordered; the sequence is GRPARGQSTTTRSRNTQQSAPTSQ. Residues 20–34 are compositionally biased toward low complexity; it reads RGQSTTTRSRNTQQS. The zn(2)-C6 fungal-type DNA-binding region spans 44-69; that stretch reads CRRCRQHRIKCSEKPCEPCRANNSKC. The disordered stretch occupies residues 139 to 167; that stretch reads HPNTPNSCPSQSGDIRQQQIPCSQHASPA. Positions 473 to 500 form a coiled coil; that stretch reads TAGQSMARLSETIRQLETALDELPEQLL. The segment at 501–528 is disordered; that stretch reads TRHGSRTPTNNGQTHRSRPTCSTMPHTN. Residues 506–528 are compositionally biased toward polar residues; the sequence is RTPTNNGQTHRSRPTCSTMPHTN.

It is found in the nucleus. Functionally, transcription factor involved in regulation of gene cluster that mediates the biosynthesis of oosporein, a metabolite required for fungal virulence that acts by evading host immunity to facilitate fungal multiplication in insects. Binds oosporein cluster genes at a conserved 5'-CGGA-3' motif with the exception of OpS5. The presence of this motif in the OpS3 promoter would suggest the formation of a positive feedback loop for self-activation. This is Oosporein cluster regulator OpS3 from Beauveria bassiana (strain ARSEF 2860) (White muscardine disease fungus).